The primary structure comprises 337 residues: Tryptophan--tRNA ligase (337 aa).

ATP contacts are provided by residues 11–13 (QPT) and 19–20 (GN). The short motif at 12–20 (PTGNLHLGN) is the 'HIGH' region element. An L-tryptophan-binding site is contributed by aspartate 135. Residues 147–149 (GED), valine 190, and 199–203 (KMSKS) each bind ATP. Positions 199 to 203 (KMSKS) match the 'KMSKS' region motif.

The protein belongs to the class-I aminoacyl-tRNA synthetase family. Homodimer.

It localises to the cytoplasm. The enzyme catalyses tRNA(Trp) + L-tryptophan + ATP = L-tryptophyl-tRNA(Trp) + AMP + diphosphate + H(+). Functionally, catalyzes the attachment of tryptophan to tRNA(Trp). The sequence is that of Tryptophan--tRNA ligase from Synechocystis sp. (strain ATCC 27184 / PCC 6803 / Kazusa).